The primary structure comprises 308 residues: Autophagy-related protein 3 (308 aa).

The tract at residues 83–159 is flexible region; sequence NFVETQTTET…NELADDDDDI (77 aa). The interval 89–121 is disordered; that stretch reads TTETRDVGDGWELEGQSEGERESGREDTKSNEE. Residues 106–120 are compositionally biased toward basic and acidic residues; the sequence is EGERESGREDTKSNE. C235 acts as the Glycyl thioester intermediate in catalysis. The segment at 239-283 is handle region; the sequence is NVMKVLMEKVRASRHRARDTEAQKNAEEDWEDLQSDIDDGLRVDQ.

Belongs to the ATG3 family. In terms of assembly, monomer. Interacts with ATG8 through an intermediate thioester bond between Cys-235 and the C-terminal Gly of ATG8. Interacts with the C-terminal region of the E1-like ATG7 enzyme. Also interacts with the ATG12-ATG5 conjugate.

The protein resides in the cytoplasm. Its function is as follows. E2 conjugating enzyme required for the cytoplasm to vacuole transport (Cvt) and autophagy. Required for selective autophagic degradation of the nucleus (nucleophagy) as well as for mitophagy which contributes to regulate mitochondrial quantity and quality by eliminating the mitochondria to a basal level to fulfill cellular energy requirements and preventing excess ROS production. Responsible for the E2-like covalent binding of phosphatidylethanolamine to the C-terminal Gly of ATG8. The ATG12-ATG5 conjugate plays a role of an E3 and promotes the transfer of ATG8 from ATG3 to phosphatidylethanolamine (PE). This step is required for the membrane association of ATG8. The formation of the ATG8-phosphatidylethanolamine conjugate is essential for autophagy and for the cytoplasm to vacuole transport (Cvt). The ATG8-PE conjugate mediates tethering between adjacent membranes and stimulates membrane hemifusion, leading to expansion of the autophagosomal membrane during autophagy. This Kluyveromyces marxianus (strain DMKU3-1042 / BCC 29191 / NBRC 104275) (Yeast) protein is Autophagy-related protein 3.